The primary structure comprises 521 residues: DEAD-box ATP-dependent RNA helicase 12 (521 aa).

The tract at residues 1–97 is disordered; that stretch reads MHHPRARYPP…QQWLRRDQAT (97 aa). Gly residues predominate over residues 13–50; that stretch reads TSGGGGGGGGGGGGGRGNGGGGFGGGGGGGGGNHGYYG. Positions 51–89 are enriched in low complexity; it reads RGPQPQPQQQHYHHQAQQLHQHQQQQQHAQRNSSSQQQQ. Positions 147–175 match the Q motif motif; that stretch reads NEFEDYFLKRELLMGIYEKGFERPSPIQE. The Helicase ATP-binding domain maps to 178–348; sequence IPIALTGSDI…EKYLPRPYVI (171 aa). 191–198 provides a ligand contact to ATP; the sequence is AKNGTGKT. The short motif at 296-299 is the DEAD box element; that stretch reads DEAD. The Helicase C-terminal domain maps to 358–518; it reads GITQYYAFVE…TIPPQIDLAV (161 aa).

The protein belongs to the DEAD box helicase family. DDX6/DHH1 subfamily.

It localises to the cytoplasm. It is found in the P-body. The catalysed reaction is ATP + H2O = ADP + phosphate + H(+). Its function is as follows. ATP-dependent RNA helicase involved in mRNA turnover, and more specifically in mRNA decapping. The polypeptide is DEAD-box ATP-dependent RNA helicase 12 (Oryza sativa subsp. japonica (Rice)).